Consider the following 295-residue polypeptide: Acetylglutamate kinase (295 aa).

Substrate contacts are provided by residues 66–67, arginine 88, and asparagine 193; that span reads GG.

It belongs to the acetylglutamate kinase family. ArgB subfamily.

The protein resides in the cytoplasm. It carries out the reaction N-acetyl-L-glutamate + ATP = N-acetyl-L-glutamyl 5-phosphate + ADP. It participates in amino-acid biosynthesis; L-arginine biosynthesis; N(2)-acetyl-L-ornithine from L-glutamate: step 2/4. In terms of biological role, catalyzes the ATP-dependent phosphorylation of N-acetyl-L-glutamate. This is Acetylglutamate kinase from Gluconobacter oxydans (strain 621H) (Gluconobacter suboxydans).